A 144-amino-acid polypeptide reads, in one-letter code: MLDIKKIKEILPHRYPFLLVDRVISVEEGKKVTAIKNVTANEEFFNGHFPEYPVMPGVLIVEALAQTSGIAMMQSEANKGKIGLFAGIDGCRFKRQVVPGDQLLLEAEITRMRGAIAKAKVKATVEGDLVCEAEIMFALSDLPQ.

Residue His48 is part of the active site.

The protein belongs to the thioester dehydratase family. FabZ subfamily.

The protein resides in the cytoplasm. It catalyses the reaction a (3R)-hydroxyacyl-[ACP] = a (2E)-enoyl-[ACP] + H2O. Involved in unsaturated fatty acids biosynthesis. Catalyzes the dehydration of short chain beta-hydroxyacyl-ACPs and long chain saturated and unsaturated beta-hydroxyacyl-ACPs. The sequence is that of 3-hydroxyacyl-[acyl-carrier-protein] dehydratase FabZ from Listeria innocua serovar 6a (strain ATCC BAA-680 / CLIP 11262).